The following is a 251-amino-acid chain: Ribonuclease PH (251 aa).

Residues Arg87 and 125–127 (GTR) contribute to the phosphate site.

The protein belongs to the RNase PH family. As to quaternary structure, homohexameric ring arranged as a trimer of dimers.

The enzyme catalyses tRNA(n+1) + phosphate = tRNA(n) + a ribonucleoside 5'-diphosphate. In terms of biological role, phosphorolytic 3'-5' exoribonuclease that plays an important role in tRNA 3'-end maturation. Removes nucleotide residues following the 3'-CCA terminus of tRNAs; can also add nucleotides to the ends of RNA molecules by using nucleoside diphosphates as substrates, but this may not be physiologically important. Probably plays a role in initiation of 16S rRNA degradation (leading to ribosome degradation) during starvation. In Saccharopolyspora erythraea (strain ATCC 11635 / DSM 40517 / JCM 4748 / NBRC 13426 / NCIMB 8594 / NRRL 2338), this protein is Ribonuclease PH.